The following is a 245-amino-acid chain: 1-(5-phosphoribosyl)-5-[(5-phosphoribosylamino)methylideneamino] imidazole-4-carboxamide isomerase (245 aa).

The Proton acceptor role is filled by D8. D130 (proton donor) is an active-site residue.

The protein belongs to the HisA/HisF family.

The protein localises to the cytoplasm. It carries out the reaction 1-(5-phospho-beta-D-ribosyl)-5-[(5-phospho-beta-D-ribosylamino)methylideneamino]imidazole-4-carboxamide = 5-[(5-phospho-1-deoxy-D-ribulos-1-ylimino)methylamino]-1-(5-phospho-beta-D-ribosyl)imidazole-4-carboxamide. The protein operates within amino-acid biosynthesis; L-histidine biosynthesis; L-histidine from 5-phospho-alpha-D-ribose 1-diphosphate: step 4/9. The chain is 1-(5-phosphoribosyl)-5-[(5-phosphoribosylamino)methylideneamino] imidazole-4-carboxamide isomerase from Pseudomonas savastanoi pv. phaseolicola (strain 1448A / Race 6) (Pseudomonas syringae pv. phaseolicola (strain 1448A / Race 6)).